The primary structure comprises 294 residues: Universal stress protein MSMEG_3950/MSMEI_3859 (294 aa).

Glycine 13 serves as a coordination point for ATP. Lysine 109 is covalently cross-linked (Isoglutamyl lysine isopeptide (Lys-Gln) (interchain with Q-Cter in protein Pup)). Residues 117–123 (GNRGMGA), 131–132 (ST), glycine 164, aspartate 197, 261–267 (GSHGRGG), and 275–277 (SVS) contribute to the ATP site.

This sequence belongs to the universal stress protein A family.

This Mycolicibacterium smegmatis (strain ATCC 700084 / mc(2)155) (Mycobacterium smegmatis) protein is Universal stress protein MSMEG_3950/MSMEI_3859.